We begin with the raw amino-acid sequence, 745 residues long: Eukaryotic translation initiation factor 3 subunit B (745 aa).

The region spanning 41–129 is the RRM domain; it reads DVIVIEGVPV…HRFSVHRFTD (89 aa). WD repeat units lie at residues 189 to 230, 251 to 293, 303 to 344, and 580 to 625; these read EHSR…RFMR, WSHE…RSFP, GQLK…LLEK, and GEHY…LQKH. Positions 644–745 form a coiled coil; that stretch reads GKDEQKRVRK…IIEETEEVLA (102 aa).

Belongs to the eIF-3 subunit B family. In terms of assembly, component of the eukaryotic translation initiation factor 3 (eIF-3) complex.

It is found in the cytoplasm. RNA-binding component of the eukaryotic translation initiation factor 3 (eIF-3) complex, which is involved in protein synthesis of a specialized repertoire of mRNAs and, together with other initiation factors, stimulates binding of mRNA and methionyl-tRNAi to the 40S ribosome. The eIF-3 complex specifically targets and initiates translation of a subset of mRNAs involved in cell proliferation. The protein is Eukaryotic translation initiation factor 3 subunit B of Mycosarcoma maydis (Corn smut fungus).